Consider the following 255-residue polypeptide: Thiazole synthase (255 aa).

K96 acts as the Schiff-base intermediate with DXP in catalysis. Residues G157, 184–185 (AG), and 206–207 (NT) each bind 1-deoxy-D-xylulose 5-phosphate.

Belongs to the ThiG family. In terms of assembly, homotetramer. Forms heterodimers with either ThiH or ThiS.

It localises to the cytoplasm. The enzyme catalyses [ThiS sulfur-carrier protein]-C-terminal-Gly-aminoethanethioate + 2-iminoacetate + 1-deoxy-D-xylulose 5-phosphate = [ThiS sulfur-carrier protein]-C-terminal Gly-Gly + 2-[(2R,5Z)-2-carboxy-4-methylthiazol-5(2H)-ylidene]ethyl phosphate + 2 H2O + H(+). It participates in cofactor biosynthesis; thiamine diphosphate biosynthesis. Its function is as follows. Catalyzes the rearrangement of 1-deoxy-D-xylulose 5-phosphate (DXP) to produce the thiazole phosphate moiety of thiamine. Sulfur is provided by the thiocarboxylate moiety of the carrier protein ThiS. In vitro, sulfur can be provided by H(2)S. This chain is Thiazole synthase, found in Clostridium acetobutylicum (strain ATCC 824 / DSM 792 / JCM 1419 / IAM 19013 / LMG 5710 / NBRC 13948 / NRRL B-527 / VKM B-1787 / 2291 / W).